The following is a 141-amino-acid chain: Nucleoside diphosphate kinase (141 aa).

Residues Lys11, Phe59, Arg87, Thr93, Arg104, and Asn114 each contribute to the ATP site. The active-site Pros-phosphohistidine intermediate is the His117.

It belongs to the NDK family. As to quaternary structure, homotetramer. It depends on Mg(2+) as a cofactor.

Its subcellular location is the cytoplasm. The enzyme catalyses a 2'-deoxyribonucleoside 5'-diphosphate + ATP = a 2'-deoxyribonucleoside 5'-triphosphate + ADP. The catalysed reaction is a ribonucleoside 5'-diphosphate + ATP = a ribonucleoside 5'-triphosphate + ADP. Functionally, major role in the synthesis of nucleoside triphosphates other than ATP. The ATP gamma phosphate is transferred to the NDP beta phosphate via a ping-pong mechanism, using a phosphorylated active-site intermediate. This chain is Nucleoside diphosphate kinase, found in Teredinibacter turnerae (strain ATCC 39867 / T7901).